A 31-amino-acid chain; its full sequence is Cytochrome b6-f complex subunit 6 (31 aa).

A helical transmembrane segment spans residues 3–23 (TITSYFGFLLAVLTITSGLFI).

Belongs to the PetL family. As to quaternary structure, the 4 large subunits of the cytochrome b6-f complex are cytochrome b6, subunit IV (17 kDa polypeptide, PetD), cytochrome f and the Rieske protein, while the 4 small subunits are PetG, PetL, PetM and PetN. The complex functions as a dimer.

Its subcellular location is the plastid. It localises to the chloroplast thylakoid membrane. Component of the cytochrome b6-f complex, which mediates electron transfer between photosystem II (PSII) and photosystem I (PSI), cyclic electron flow around PSI, and state transitions. PetL is important for photoautotrophic growth as well as for electron transfer efficiency and stability of the cytochrome b6-f complex. In Lotus japonicus (Lotus corniculatus var. japonicus), this protein is Cytochrome b6-f complex subunit 6.